A 394-amino-acid chain; its full sequence is Phosphopentomutase (394 aa).

Mn(2+) is bound by residues D13, D286, H291, D327, H328, and H339.

Belongs to the phosphopentomutase family. Requires Mn(2+) as cofactor.

It localises to the cytoplasm. The catalysed reaction is 2-deoxy-alpha-D-ribose 1-phosphate = 2-deoxy-D-ribose 5-phosphate. It catalyses the reaction alpha-D-ribose 1-phosphate = D-ribose 5-phosphate. The protein operates within carbohydrate degradation; 2-deoxy-D-ribose 1-phosphate degradation; D-glyceraldehyde 3-phosphate and acetaldehyde from 2-deoxy-alpha-D-ribose 1-phosphate: step 1/2. In terms of biological role, isomerase that catalyzes the conversion of deoxy-ribose 1-phosphate (dRib-1-P) and ribose 1-phosphate (Rib-1-P) to deoxy-ribose 5-phosphate (dRib-5-P) and ribose 5-phosphate (Rib-5-P), respectively. In Bacillus cereus (strain AH187), this protein is Phosphopentomutase.